The following is a 429-amino-acid chain: Dual-specificity RNA methyltransferase RlmN (429 aa).

A disordered region spans residues 1-23 (MRAMQTHTEIAPMPIPGHVDPVP). The Proton acceptor role is filled by glutamate 128. The Radical SAM core domain maps to 134 to 397 (DADRGTLCVS…APVRTPRGRD (264 aa)). Cysteine 141 and cysteine 402 are disulfide-bonded. Residues cysteine 148, cysteine 152, and cysteine 155 each coordinate [4Fe-4S] cluster. S-adenosyl-L-methionine-binding positions include 226–227 (GE), serine 258, 280–282 (SLH), and asparagine 359. Residue cysteine 402 is the S-methylcysteine intermediate of the active site.

It belongs to the radical SAM superfamily. RlmN family. [4Fe-4S] cluster serves as cofactor.

It is found in the cytoplasm. The catalysed reaction is adenosine(2503) in 23S rRNA + 2 reduced [2Fe-2S]-[ferredoxin] + 2 S-adenosyl-L-methionine = 2-methyladenosine(2503) in 23S rRNA + 5'-deoxyadenosine + L-methionine + 2 oxidized [2Fe-2S]-[ferredoxin] + S-adenosyl-L-homocysteine. The enzyme catalyses adenosine(37) in tRNA + 2 reduced [2Fe-2S]-[ferredoxin] + 2 S-adenosyl-L-methionine = 2-methyladenosine(37) in tRNA + 5'-deoxyadenosine + L-methionine + 2 oxidized [2Fe-2S]-[ferredoxin] + S-adenosyl-L-homocysteine. In terms of biological role, specifically methylates position 2 of adenine 2503 in 23S rRNA and position 2 of adenine 37 in tRNAs. m2A2503 modification seems to play a crucial role in the proofreading step occurring at the peptidyl transferase center and thus would serve to optimize ribosomal fidelity. The protein is Dual-specificity RNA methyltransferase RlmN of Novosphingobium aromaticivorans (strain ATCC 700278 / DSM 12444 / CCUG 56034 / CIP 105152 / NBRC 16084 / F199).